The sequence spans 554 residues: Dihydroxy-acid dehydratase (554 aa).

A [2Fe-2S] cluster-binding site is contributed by cysteine 48. Aspartate 80 contacts Mg(2+). Cysteine 121 contributes to the [2Fe-2S] cluster binding site. Residues aspartate 122 and lysine 123 each coordinate Mg(2+). N6-carboxylysine is present on lysine 123. Cysteine 193 contacts [2Fe-2S] cluster. Glutamate 444 contributes to the Mg(2+) binding site. Catalysis depends on serine 470, which acts as the Proton acceptor.

It belongs to the IlvD/Edd family. As to quaternary structure, homodimer. [2Fe-2S] cluster serves as cofactor. The cofactor is Mg(2+).

It carries out the reaction (2R)-2,3-dihydroxy-3-methylbutanoate = 3-methyl-2-oxobutanoate + H2O. The catalysed reaction is (2R,3R)-2,3-dihydroxy-3-methylpentanoate = (S)-3-methyl-2-oxopentanoate + H2O. It functions in the pathway amino-acid biosynthesis; L-isoleucine biosynthesis; L-isoleucine from 2-oxobutanoate: step 3/4. Its pathway is amino-acid biosynthesis; L-valine biosynthesis; L-valine from pyruvate: step 3/4. Functions in the biosynthesis of branched-chain amino acids. Catalyzes the dehydration of (2R,3R)-2,3-dihydroxy-3-methylpentanoate (2,3-dihydroxy-3-methylvalerate) into 2-oxo-3-methylpentanoate (2-oxo-3-methylvalerate) and of (2R)-2,3-dihydroxy-3-methylbutanoate (2,3-dihydroxyisovalerate) into 2-oxo-3-methylbutanoate (2-oxoisovalerate), the penultimate precursor to L-isoleucine and L-valine, respectively. This Tremblaya princeps protein is Dihydroxy-acid dehydratase.